The chain runs to 138 residues: Large-conductance mechanosensitive channel (138 aa).

The next 3 helical transmembrane spans lie at 15-35 (VDLA…NSIV), 38-58 (IIMP…MFIQ), and 80-100 (GNFI…FLVV).

Belongs to the MscL family. In terms of assembly, homopentamer.

The protein localises to the cell inner membrane. Channel that opens in response to stretch forces in the membrane lipid bilayer. May participate in the regulation of osmotic pressure changes within the cell. In Brucella canis (strain ATCC 23365 / NCTC 10854 / RM-666), this protein is Large-conductance mechanosensitive channel.